The primary structure comprises 257 residues: Hydroxyacylglutathione hydrolase (257 aa).

His-54, His-56, Asp-58, His-59, His-113, Asp-137, and His-175 together coordinate Zn(2+).

It belongs to the metallo-beta-lactamase superfamily. Glyoxalase II family. As to quaternary structure, monomer. Requires Zn(2+) as cofactor.

It catalyses the reaction an S-(2-hydroxyacyl)glutathione + H2O = a 2-hydroxy carboxylate + glutathione + H(+). It participates in secondary metabolite metabolism; methylglyoxal degradation; (R)-lactate from methylglyoxal: step 2/2. Functionally, thiolesterase that catalyzes the hydrolysis of S-D-lactoyl-glutathione to form glutathione and D-lactic acid. The protein is Hydroxyacylglutathione hydrolase of Trichormus variabilis (strain ATCC 29413 / PCC 7937) (Anabaena variabilis).